We begin with the raw amino-acid sequence, 147 residues long: Ponticulin-like protein C2 (147 aa).

Positions 1 to 20 are cleaved as a signal peptide; sequence MKFTKPLLLLIVAIIASSNA. Residue asparagine 118 is the site of GPI-like-anchor amidated asparagine attachment. An N-linked (GlcNAc...) asparagine glycan is attached at asparagine 118. Positions 119–147 are cleaved as a propeptide — removed in mature form; that stretch reads SSESDSSDSTRIGASFALFALALLSMLAL.

The protein belongs to the ponticulin family. Post-translationally, the GPI-like-anchor contains a phosphoceramide group, rather than a phosphatidyl group.

It localises to the cell membrane. The polypeptide is Ponticulin-like protein C2 (ponC2) (Dictyostelium discoideum (Social amoeba)).